We begin with the raw amino-acid sequence, 325 residues long: Replication factor C small subunit (325 aa).

ATP is bound at residue 54–61 (GPAGTGKT).

Belongs to the activator 1 small subunits family. RfcS subfamily. As to quaternary structure, heteromultimer composed of small subunits (RfcS) and large subunits (RfcL).

In terms of biological role, part of the RFC clamp loader complex which loads the PCNA sliding clamp onto DNA. This Haloarcula marismortui (strain ATCC 43049 / DSM 3752 / JCM 8966 / VKM B-1809) (Halobacterium marismortui) protein is Replication factor C small subunit.